The sequence spans 229 residues: Putative N-acetylmannosamine-6-phosphate 2-epimerase (229 aa).

The protein belongs to the NanE family.

The catalysed reaction is an N-acyl-D-glucosamine 6-phosphate = an N-acyl-D-mannosamine 6-phosphate. It participates in amino-sugar metabolism; N-acetylneuraminate degradation; D-fructose 6-phosphate from N-acetylneuraminate: step 3/5. Functionally, converts N-acetylmannosamine-6-phosphate (ManNAc-6-P) to N-acetylglucosamine-6-phosphate (GlcNAc-6-P). This Actinobacillus pleuropneumoniae serotype 3 (strain JL03) protein is Putative N-acetylmannosamine-6-phosphate 2-epimerase.